Here is a 340-residue protein sequence, read N- to C-terminus: Coproporphyrin III ferrochelatase (340 aa).

S52 and Y121 together coordinate Fe-coproporphyrin III. Fe(2+) is bound by residues H177 and E260.

This sequence belongs to the ferrochelatase family.

The protein localises to the cytoplasm. The catalysed reaction is Fe-coproporphyrin III + 2 H(+) = coproporphyrin III + Fe(2+). It participates in porphyrin-containing compound metabolism; protoheme biosynthesis. Functionally, involved in coproporphyrin-dependent heme b biosynthesis. Catalyzes the insertion of ferrous iron into coproporphyrin III to form Fe-coproporphyrin III. The sequence is that of Coproporphyrin III ferrochelatase from Mycobacteroides abscessus (strain ATCC 19977 / DSM 44196 / CCUG 20993 / CIP 104536 / JCM 13569 / NCTC 13031 / TMC 1543 / L948) (Mycobacterium abscessus).